The chain runs to 500 residues: Na(+)/H(+) antiporter NhaB (500 aa).

Helical transmembrane passes span 34–54, 58–78, 96–116, 129–149, 150–170, 205–225, 241–261, 311–331, 350–370, 394–414, 450–470, and 477–497; these read LLLA…QFIF, MALK…ALLL, VILL…LLLF, AVLS…LDAL, TVTA…HRVA, LLMH…VGEP, FFLK…VTCV, ILIV…LMVI, FQDA…VAVI, MLYL…VATI, ATPN…APLI, and MVWM…WAVT.

This sequence belongs to the NhaB Na(+)/H(+) (TC 2.A.34) antiporter family.

The protein resides in the cell inner membrane. The catalysed reaction is 2 Na(+)(in) + 3 H(+)(out) = 2 Na(+)(out) + 3 H(+)(in). In terms of biological role, na(+)/H(+) antiporter that extrudes sodium in exchange for external protons. In Pseudomonas entomophila (strain L48), this protein is Na(+)/H(+) antiporter NhaB.